A 193-amino-acid chain; its full sequence is Superoxide dismutase [Fe] (193 aa).

Fe cation is bound by residues His27, His74, Asp157, and His161.

This sequence belongs to the iron/manganese superoxide dismutase family. Monomer. Fe cation is required as a cofactor.

It catalyses the reaction 2 superoxide + 2 H(+) = H2O2 + O2. In terms of biological role, destroys superoxide anion radicals which are normally produced within the cells and which are toxic to biological systems. Involved in the metabolism of 4-aminophenol. May have an indirect role in hydroxyquinol metabolism by scavenging and detoxifying reactive species that promote its auto-oxidation. The chain is Superoxide dismutase [Fe] from Burkholderia sp.